We begin with the raw amino-acid sequence, 153 residues long: MAHLVWQDDLNTGIQVIDNQHKRIVEMINLLHDAQQGKEHAAIAEVIEELVDYTLSHFAFEETLMEDAGYQFSRAHKKIHELFIRRVSEYRVRFQAGEDVGDELKGLLSRWLFNHIRNDDAGYVDAVRHSMSELVKDKSEGGWLSRSMKRFFG.

Fe cation is bound by residues histidine 21, histidine 57, glutamate 61, histidine 76, histidine 80, histidine 115, and aspartate 120.

Belongs to the hemerythrin family. In terms of assembly, monomer.

Its function is as follows. Oxygen-binding protein. May be involved in a storage mechanism or for delivery to oxygen-requiring enzymes. The oxygen-binding site contains two iron atoms. The protein is Bacteriohemerythrin of Pseudomonas paraeruginosa (strain DSM 24068 / PA7) (Pseudomonas aeruginosa (strain PA7)).